The chain runs to 328 residues: 2-oxoglutarate-dependent dioxygenase gloF (328 aa).

The Fe2OG dioxygenase domain occupies 175-289 (DTSELRMNHY…RYSVAYFGKP (115 aa)). Positions 201, 203, and 261 each coordinate Fe cation. Arginine 280 lines the 2-oxoglutarate pocket.

This sequence belongs to the iron/ascorbate-dependent oxidoreductase family. Fe(2+) is required as a cofactor.

The protein operates within mycotoxin biosynthesis. Its function is as follows. 2-oxoglutarate-dependent dioxygenase; part of the gene cluster that mediates the biosynthesis of pneumocandins, lipohexapeptides of the echinocandin family that prevent fungal cell wall formation by non-competitive inhibition of beta-1,3-glucan synthase. The 10,12-dimethylmyristoyl side chain is synthesized by the reducing polyketide synthase gloL/GLPKS4. The thioesterase gloN/GLHYD exclusively interacts with gloL/GLPKS4 to maintain turnover of the polyketide side chain. The 10R,12S-dimethylmyristic acid is then transferred to the first thiolation domain of the nonribosomal peptide synthetase gloA/GLNRPS4 by the acyl-AMP ligase gloD/GLligase, followed by its acylation to L-ornithine to trigger elongation of the cyclic hexapeptide. L-ornithine, 4R-hydroxyl-L-proline (generated from L-proline by the dioxygenase gloF/GLOXY2), 3S-hydroxyl-L-homotyrosine (generated by gloG/GLHtyB, gloH/GLHtyA, gloI/GLHtyC, gloJ/GLHtyD and hydroxylated at C-3 by the dioxygenase gloM/GLOXY1), 3R-hydroxyl-L-glutamine (generated from L-glutamine probably by the dioxygenase gloE/GLOXY3) and 3S-hydroxyl-L-proline (generated from L-proline by the dioxygenase gloF/GLOXY2 to yield pneumocandin B0), or 3S-hydroxyl-4S-methyl-L-proline (generated from L-leucine by the dioxygenase gloC/GLOXY4 to yield pneumocandin A0) are sequentially added to the growing chain. The last C domain of gloA/GLNRPS4 is proposed to be responsible for cyclization by condensation to form the peptide bond between L-ornithine and 3S-hydroxyl-4S-methyl-L-proline (for pneumocandin A0) or 3S-hydroxyl-L-proline (for pneumocandin B0). Finally, the subsequent C-4 hydroxylation of 3S-hydroxyl-L-homotyrosine and L-ornithine dihydroxylation at C-4 and C-5 are performed by the cytochrome P450 monooxygenases gloP/GLP450-1 and gloO/GLP450-2, respectively. The protein is 2-oxoglutarate-dependent dioxygenase gloF of Glarea lozoyensis (strain ATCC 20868 / MF5171).